A 713-amino-acid polypeptide reads, in one-letter code: Meiotic activator RIM4 (713 aa).

Residues 1–90 form a disordered region; that stretch reads MKTEISTADS…TSTSTESRGR (90 aa). The span at 21-31 shows a compositional bias: basic and acidic residues; that stretch reads ADSELVIREDI. Residues 50 to 71 are compositionally biased toward acidic residues; the sequence is GEDSDTDSDNFLQDPEDDVDEE. Residues 74-90 are compositionally biased toward low complexity; sequence GRGTVTTTSTSTESRGR. The RRM 1 domain maps to 93-172; the sequence is SCIFVASLAA…RRLRCEPAKV (80 aa). The tract at residues 276–337 is disordered; it reads HQNNGIINND…SDGIYDDEDK (62 aa). The segment covering 278–298 has biased composition (low complexity); sequence NNGIINNDGSNNNDNNNSNNN. A compositionally biased stretch (basic and acidic residues) spans 299–327; sequence NREDSRRNGDVIEEECGHVHGSDSEEKLT. An RRM 2 domain is found at 346-420; it reads RSIFVGQLDK…KTMHVQYKEV (75 aa). The interval 524 to 609 is disordered; that stretch reads KSMPNSWSSP…KRYARRSSYG (86 aa). S525 is modified (phosphoserine). Positions 526–546 are enriched in low complexity; sequence MPNSWSSPSSKSVNSENESVN. Residues 563–574 show a composition bias toward polar residues; sequence GRYNAANSFTTY. Positions 575 to 594 are enriched in low complexity; sequence NNSSAGNSNNNNNNNNSNSN.

Polyubiquitinated by RSP5.

Its function is as follows. Positive regulator of sporulation-specific genes and of sporulation. Required for premeiotic DNA synthesis and meiotic chromosomal segregation. May act in a nutritional signaling pathway. The sequence is that of Meiotic activator RIM4 (RIM4) from Saccharomyces cerevisiae (strain ATCC 204508 / S288c) (Baker's yeast).